Consider the following 326-residue polypeptide: Dolichyl-phosphate beta-glucosyltransferase (326 aa).

Topologically, residues 1 to 7 (MWTCLCQ) are lumenal. The chain crosses the membrane as a helical span at residues 8-28 (LCFYLLSTLAVAALSIAALVL). Over 29-326 (YKTKPYPNIK…RIASIQKKEK (298 aa)) the chain is Cytoplasmic.

It belongs to the glycosyltransferase 2 family.

It localises to the endoplasmic reticulum membrane. The catalysed reaction is a di-trans,poly-cis-dolichyl phosphate + UDP-alpha-D-glucose = a di-trans,poly-cis-dolichyl beta-D-glucosyl phosphate + UDP. Its pathway is protein modification; protein glycosylation. Required for normal production of N-glycosylated proteins in the endoplasmic reticulum (ER). Required for embryonic segmentation, dorsal-ventral patterning and gastrulation. Required for chitin orientation and shaping of the apical and lateral plasma membranes of epidermal cells during cuticle differentiation. Also required for correctly shaping apical membrane topology of the epithelia of other organs such as the midgut and the hindgut. The polypeptide is Dolichyl-phosphate beta-glucosyltransferase (wol) (Drosophila melanogaster (Fruit fly)).